A 382-amino-acid polypeptide reads, in one-letter code: E3 ubiquitin-protein ligase RNF133 (382 aa).

One can recognise a PA domain in the interval 65–167; that stretch reads SSILKRVAGV…IKGMEILHLI (103 aa). A helical transmembrane segment spans residues 190–210; the sequence is YFVSFMIVTTATLAYFTFYHI. Residues 256 to 297 form an RING-type; atypical zinc finger; the sequence is CVICFEAYKPNEIVRILTCKHFFHKNCIDPWILAHGTCPMCK. Residues 328–382 form a disordered region; that stretch reads TLSPVEEETNYELPPARTSSKVTHVQEHPTSSANAGSQPPEAEETSHPSHGQQVL. A compositionally biased stretch (polar residues) spans 344–364; that stretch reads RTSSKVTHVQEHPTSSANAGS.

As to quaternary structure, interacts with E3 ligase UBE2J1. Post-translationally, auto-ubiquitinated. Expression is testis-specific.

It localises to the endoplasmic reticulum membrane. It carries out the reaction S-ubiquitinyl-[E2 ubiquitin-conjugating enzyme]-L-cysteine + [acceptor protein]-L-lysine = [E2 ubiquitin-conjugating enzyme]-L-cysteine + N(6)-ubiquitinyl-[acceptor protein]-L-lysine.. Its pathway is protein modification; protein ubiquitination. Has E3 ubiquitin-protein ligase activity. Plays a role in male fecundity through the interaction with the E2 ubituitin-protein ligase UBE2J1. The chain is E3 ubiquitin-protein ligase RNF133 (Rnf133) from Mus musculus (Mouse).